We begin with the raw amino-acid sequence, 653 residues long: Protease 1 (653 aa).

A signal peptide (or 27) is located at residues 1–20; it reads MKRICGSLLLLGLSISAALA. Positions 21–205 are excised as a propeptide; it reads APASRPAAFD…RRLAAASGEK (185 aa). Intrachain disulfides connect Cys-211–Cys-421, Cys-217–Cys-285, and Cys-241–Cys-263. Active-site charge relay system residues include His-262, Asp-318, and Ser-399. The region spanning 474 to 553 is the PKD domain; it reads NTPPVANFTS…TNTKTGSVTV (80 aa). Residues 474–653 constitute a propeptide, thr/Ser-rich; that stretch reads NTPPVANFTS…AAQRAPGSCG (180 aa). The P/Homo B domain occupies 555-653; that stretch reads GGPGAQTYTN…AAQRAPGSCG (99 aa).

This sequence belongs to the peptidase S1 family. In terms of processing, three disulfide bonds are present.

The protein localises to the secreted. The catalysed reaction is Preferential cleavage: Lys-|-Xaa, including Lys-|-Pro.. The sequence is that of Protease 1 from Achromobacter lyticus.